Consider the following 354-residue polypeptide: MGRLLALSLLGIALALLGERLLALRNRLKASREVESVDLPNCHLIKGIEAGAEDIDILPNGLAFFSVGLKCPGLHSFAPDKPGGILMMDLNEENPRALELRVSRGFNLASFNPHGISTFIDSDDTVYLFVVNHPEFKNTVEIFKFEEEENSLLHLKTIKHELLPSVNDIIAVGPEHFYATNDHYFSDPFLKYLETYLNLHWTNVVYYSPNEVKVVAEGFDSANGINISPDKKYIYVADILAHEIHVLEKHPNMNLTQLKVLKLDTLVDNLSIDPSSGDVLVGCHPNGQKLFVYDPKNPPSSEVLRIQNILSEKPTVTTVYANNGSVLQGSSVASVYDKKLLIGTLYHRALYCEL.

A disulfide bridge connects residues Cys-42 and Cys-352. Ca(2+) contacts are provided by Glu-53 and Asp-54. Catalysis depends on His-114, which acts as the Proton acceptor. Ca(2+) is bound by residues Ile-116, Asn-167, Asp-168, and Asn-223. Asn-254 carries an N-linked (GlcNAc...) asparagine glycan. The Ca(2+) site is built by Asp-268 and Asn-269. 2 N-linked (GlcNAc...) asparagine glycosylation sites follow: Asn-269 and Asn-323.

It belongs to the paraoxonase family. As to quaternary structure, homotrimer. Requires Ca(2+) as cofactor. In terms of processing, glycosylated. Post-translationally, the signal sequence is not cleaved.

Its subcellular location is the membrane. The enzyme catalyses a phenyl acetate + H2O = a phenol + acetate + H(+). The catalysed reaction is an N-acyl-L-homoserine lactone + H2O = an N-acyl-L-homoserine + H(+). Functionally, capable of hydrolyzing lactones and a number of aromatic carboxylic acid esters. The protein is Serum paraoxonase/arylesterase 2 (PON2) of Bos taurus (Bovine).